A 664-amino-acid polypeptide reads, in one-letter code: UvrABC system protein B (664 aa).

One can recognise a Helicase ATP-binding domain in the interval 25-412; that stretch reads KGLVSGLTDQ…LQVVEQLVRP (388 aa). 38 to 45 serves as a coordination point for ATP; sequence GVTGSGKT. Residues 91–114 carry the Beta-hairpin motif; that stretch reads YYDYYQPEAYVPQKDMYIEKDSDI. The Helicase C-terminal domain occupies 428 to 594; the sequence is QIDDLLEEVK…GIRKAIKDIN (167 aa). The 36-residue stretch at 620–655 folds into the UVR domain; that stretch reads ARLIKELESQMKKAAKNLEFERAALIRDRVVELRAA.

Belongs to the UvrB family. As to quaternary structure, forms a heterotetramer with UvrA during the search for lesions. Interacts with UvrC in an incision complex.

It is found in the cytoplasm. In terms of biological role, the UvrABC repair system catalyzes the recognition and processing of DNA lesions. A damage recognition complex composed of 2 UvrA and 2 UvrB subunits scans DNA for abnormalities. Upon binding of the UvrA(2)B(2) complex to a putative damaged site, the DNA wraps around one UvrB monomer. DNA wrap is dependent on ATP binding by UvrB and probably causes local melting of the DNA helix, facilitating insertion of UvrB beta-hairpin between the DNA strands. Then UvrB probes one DNA strand for the presence of a lesion. If a lesion is found the UvrA subunits dissociate and the UvrB-DNA preincision complex is formed. This complex is subsequently bound by UvrC and the second UvrB is released. If no lesion is found, the DNA wraps around the other UvrB subunit that will check the other stand for damage. The protein is UvrABC system protein B of Dehalococcoides mccartyi (strain CBDB1).